Reading from the N-terminus, the 252-residue chain is 14-3-3 protein 10 (252 aa).

It belongs to the 14-3-3 family. In terms of assembly, homodimer.

In Solanum lycopersicum (Tomato), this protein is 14-3-3 protein 10 (TFT10).